The chain runs to 400 residues: Melanization protease 1 (400 aa).

The first 22 residues, 1-22 (MEPHFFFTVLWMLLMGTSSTYA), serve as a signal peptide directing secretion. A propeptide spans 23 to 137 (QEIFGYCRTP…PNCGENFGDR (115 aa)) (activation peptide). One can recognise a Clip domain in the interval 28 to 91 (YCRTPDENSG…FCFTNVQICC (64 aa)). Cystine bridges form between Cys29–Cys90, Cys39–Cys70, and Cys45–Cys91. The disordered stretch occupies residues 98–120 (NQQPQWGNHPQPTQTTKPTKRSG). Intrachain disulfides connect Cys130-Cys268, Cys168-Cys184, and Cys210-Cys220. The Peptidase S1 domain maps to 138-399 (VVGGNETTKR…YLNWIENNVR (262 aa)). Asn142 carries N-linked (GlcNAc...) asparagine glycosylation. His183 serves as the catalytic Charge relay system. 4 residues coordinate Ca(2+): Glu201, Asp203, Thr206, and Asp209. Asp248 (charge relay system) is an active-site residue. The N-linked (GlcNAc...) asparagine glycan is linked to Asn296. 2 cysteine pairs are disulfide-bonded: Cys315-Cys332 and Cys342-Cys375. Ser346 functions as the Charge relay system in the catalytic mechanism.

Belongs to the peptidase S1 family. CLIP subfamily.

In terms of biological role, serine protease which plays an essential role in the melanization immune response by acting downstream of sp7 to activate prophenoloxidase (PPO1). May function in diverse Hayan-dependent PPO1-activating cascades that are negatively controlled by different serpin proteins; Spn27A in the hemolymph and Spn77BA in the trachea. Regulation of melanization and PPO1 activation appears to be largely independent of the Toll signaling pathway. The polypeptide is Melanization protease 1 (Drosophila melanogaster (Fruit fly)).